Reading from the N-terminus, the 298-residue chain is Acetyl-coenzyme A carboxylase carboxyl transferase subunit beta (298 aa).

The 270-residue stretch at Leu-26–Ala-295 folds into the CoA carboxyltransferase N-terminal domain.

It belongs to the AccD/PCCB family. As to quaternary structure, acetyl-CoA carboxylase is a heterohexamer composed of biotin carboxyl carrier protein (AccB), biotin carboxylase (AccC) and two subunits each of ACCase subunit alpha (AccA) and ACCase subunit beta (AccD).

It is found in the cytoplasm. The catalysed reaction is N(6)-carboxybiotinyl-L-lysyl-[protein] + acetyl-CoA = N(6)-biotinyl-L-lysyl-[protein] + malonyl-CoA. It functions in the pathway lipid metabolism; malonyl-CoA biosynthesis; malonyl-CoA from acetyl-CoA: step 1/1. Its function is as follows. Component of the acetyl coenzyme A carboxylase (ACC) complex. Biotin carboxylase (BC) catalyzes the carboxylation of biotin on its carrier protein (BCCP) and then the CO(2) group is transferred by the transcarboxylase to acetyl-CoA to form malonyl-CoA. The protein is Acetyl-coenzyme A carboxylase carboxyl transferase subunit beta of Agrobacterium fabrum (strain C58 / ATCC 33970) (Agrobacterium tumefaciens (strain C58)).